The primary structure comprises 570 residues: Sulfite reductase [NADPH] hemoprotein beta-component (570 aa).

Positions 434, 440, 479, and 483 each coordinate [4Fe-4S] cluster. Cys483 contributes to the siroheme binding site.

The protein belongs to the nitrite and sulfite reductase 4Fe-4S domain family. As to quaternary structure, alpha(8)-beta(8). The alpha component is a flavoprotein, the beta component is a hemoprotein. Siroheme is required as a cofactor. The cofactor is [4Fe-4S] cluster.

It catalyses the reaction hydrogen sulfide + 3 NADP(+) + 3 H2O = sulfite + 3 NADPH + 4 H(+). The protein operates within sulfur metabolism; hydrogen sulfide biosynthesis; hydrogen sulfide from sulfite (NADPH route): step 1/1. Functionally, component of the sulfite reductase complex that catalyzes the 6-electron reduction of sulfite to sulfide. This is one of several activities required for the biosynthesis of L-cysteine from sulfate. The protein is Sulfite reductase [NADPH] hemoprotein beta-component of Salmonella schwarzengrund (strain CVM19633).